The sequence spans 322 residues: Major serine/threonine-protein phosphatase PP2A-2 catalytic subunit (322 aa).

Positions 70, 72, 98, and 130 each coordinate Mn(2+). The Proton donor role is filled by histidine 131. Mn(2+)-binding residues include histidine 180 and histidine 254. Leucine 322 carries the leucine methyl ester modification.

The protein belongs to the PPP phosphatase family. PP-2A subfamily. It depends on Mn(2+) as a cofactor.

The catalysed reaction is O-phospho-L-seryl-[protein] + H2O = L-seryl-[protein] + phosphate. The enzyme catalyses O-phospho-L-threonyl-[protein] + H2O = L-threonyl-[protein] + phosphate. Its function is as follows. Essential role in cell cycle control. PP2A may be involved in controlling the entry into mitosis, possibly acting as an inhibitor. This chain is Major serine/threonine-protein phosphatase PP2A-2 catalytic subunit (ppa2), found in Schizosaccharomyces pombe (strain 972 / ATCC 24843) (Fission yeast).